Here is a 1887-residue protein sequence, read N- to C-terminus: Fatty acid synthase subunit alpha (1887 aa).

A Glycyl lysine isopeptide (Lys-Gly) (interchain with G-Cter in ubiquitin) cross-link involves residue K37. S50 is modified (phosphoserine). The tract at residues 96–120 is disordered; it reads ELAAKEEPAKEEAPAPTPAASAPAP. The span at 98–108 shows a compositional bias: basic and acidic residues; that stretch reads AAKEEPAKEEA. The Carrier domain maps to 145-220; the sequence is VKASLLLHVL…ETFQDTFSGA (76 aa). An O-(pantetheine 4'-phosphoryl)serine modification is found at S180. S523 is modified (phosphoserine). The interval 675 to 874 is beta-ketoacyl reductase; that stretch reads DKYVLITGAG…CGAIIGWTRG (200 aa). At S958 the chain carries Phosphoserine. The Ketosynthase family 3 (KS3) domain maps to 1123–1657; it reads QEVIVEEDLE…QKGGQAIVVH (535 aa). Residue C1305 is the For beta-ketoacyl synthase activity of the active site. S1440 is modified (phosphoserine). Residues H1542 and H1583 each act as for beta-ketoacyl synthase activity in the active site. 3 residues coordinate Mg(2+): D1772, V1773, and E1774. Acetyl-CoA-binding positions include 1772–1774, Y1798, S1808, 1817–1827, 1841–1844, and 1871–1873; these read DVE, EAVFKSLGVKS, RVNK, and ISH. Residues S1872 and H1873 each coordinate Mg(2+).

The protein belongs to the thiolase-like superfamily. Fungal fatty acid synthetase subunit alpha family. In terms of assembly, [Alpha(6)beta(6)] hexamers of two multifunctional subunits (alpha and beta). In terms of processing, 4'-phosphopantetheine is transferred from CoA to a specific serine of the Acyl carrier domain by the C-terminal PPT domain. This modification is essential for activity because fatty acids are bound in thioester linkage to the sulfhydryl of the prosthetic group.

The enzyme catalyses acetyl-CoA + n malonyl-CoA + 2n NADPH + 4n H(+) = a long-chain-acyl-CoA + n CoA + n CO2 + 2n NADP(+).. The catalysed reaction is a fatty acyl-[ACP] + malonyl-[ACP] + H(+) = a 3-oxoacyl-[ACP] + holo-[ACP] + CO2. It catalyses the reaction a (3R)-hydroxyacyl-[ACP] + NADP(+) = a 3-oxoacyl-[ACP] + NADPH + H(+). With respect to regulation, inhibited by cerulenin by covalent binding to active site of the ketoacyl synthase (KS) region. Its function is as follows. Fatty acid synthetase catalyzes the formation of long-chain fatty acids from acetyl-CoA, malonyl-CoA and NADPH. The alpha subunit contains domains for: acyl carrier protein, 3-oxoacyl-[acyl-carrier-protein] reductase, and 3-oxoacyl-[acyl-carrier-protein] synthase. This subunit coordinates the binding of the six beta subunits to the enzyme complex. The protein is Fatty acid synthase subunit alpha (FAS2) of Saccharomyces cerevisiae (strain ATCC 204508 / S288c) (Baker's yeast).